A 398-amino-acid polypeptide reads, in one-letter code: 1-deoxy-D-xylulose 5-phosphate reductoisomerase (398 aa).

Positions 10, 11, 12, 13, 36, 37, 38, and 124 each coordinate NADPH. A 1-deoxy-D-xylulose 5-phosphate-binding site is contributed by K125. NADPH is bound at residue E126. D150 provides a ligand contact to Mn(2+). 1-deoxy-D-xylulose 5-phosphate is bound by residues S151, E152, S186, and H209. Residue E152 coordinates Mn(2+). Position 215 (G215) interacts with NADPH. 1-deoxy-D-xylulose 5-phosphate is bound by residues S222, N227, K228, and E231. E231 contributes to the Mn(2+) binding site.

This sequence belongs to the DXR family. Homodimer. The cofactor is Mg(2+). Mn(2+) is required as a cofactor.

The enzyme catalyses 2-C-methyl-D-erythritol 4-phosphate + NADP(+) = 1-deoxy-D-xylulose 5-phosphate + NADPH + H(+). The protein operates within isoprenoid biosynthesis; isopentenyl diphosphate biosynthesis via DXP pathway; isopentenyl diphosphate from 1-deoxy-D-xylulose 5-phosphate: step 1/6. Functionally, catalyzes the NADPH-dependent rearrangement and reduction of 1-deoxy-D-xylulose-5-phosphate (DXP) to 2-C-methyl-D-erythritol 4-phosphate (MEP). The sequence is that of 1-deoxy-D-xylulose 5-phosphate reductoisomerase from Salmonella paratyphi A (strain ATCC 9150 / SARB42).